The chain runs to 341 residues: Heterogeneous nuclear ribonucleoproteins A2/B1 (341 aa).

RRM domains are found at residues 9 to 92 and 100 to 179; these read RKLF…ESGK and KKLF…LSRQ. K10 is covalently cross-linked (Glycyl lysine isopeptide (Lys-Gly) (interchain with G-Cter in SUMO2)). A Phosphoserine modification is found at S17. R26 bears the Omega-N-methylarginine mark. S73 bears the Phosphoserine mark. Position 92 is an N6,N6-dimethyllysine; alternate (K92). K92 is covalently cross-linked (Glycyl lysine isopeptide (Lys-Gly) (interchain with G-Cter in SUMO2); alternate). Residues K100, K108, and K125 each participate in a glycyl lysine isopeptide (Lys-Gly) (interchain with G-Cter in SUMO2) cross-link. Residue T128 is modified to Phosphothreonine. S137 carries the post-translational modification Phosphoserine. A Glycyl lysine isopeptide (Lys-Gly) (interchain with G-Cter in SUMO2) cross-link involves residue K140. At T147 the chain carries Phosphothreonine. Glycyl lysine isopeptide (Lys-Gly) (interchain with G-Cter in SUMO2); alternate cross-links involve residues K156 and K161. Residues K156 and K161 each carry the N6-acetyllysine; alternate modification. T164 carries the phosphothreonine modification. Residue K174 forms a Glycyl lysine isopeptide (Lys-Gly) (interchain with G-Cter in SUMO2) linkage. S177 and S189 each carry phosphoserine. A disordered region spans residues 181–341; that stretch reads MQEVQSSRSG…SGGYGGRSRY (161 aa). Residues 190–211 are compositionally biased toward gly residues; it reads GRGGNFGFGDSRGGGGNFGPGP. At R191 the chain carries Asymmetric dimethylarginine; alternate. R191 is subject to Dimethylated arginine; alternate. At R191 the chain carries Omega-N-methylarginine; alternate. At S200 the chain carries Phosphoserine. Residue R201 is modified to Asymmetric dimethylarginine; alternate. Position 201 is a dimethylated arginine; alternate (R201). At R201 the chain carries Omega-N-methylarginine; alternate. A Phosphoserine modification is found at S213. R216 bears the Omega-N-methylarginine mark. Phosphoserine occurs at positions 219 and 224. R226 carries the post-translational modification Omega-N-methylarginine. S247 is subject to Phosphoserine. An Asymmetric dimethylarginine; alternate modification is found at R254. R254 bears the Omega-N-methylarginine; alternate mark. A nuclear targeting sequence region spans residues 296–335; sequence QQPSNYGPMKSGNFGGSRNMGGPYGGGNYGPGGSGGSGGY. A compositionally biased stretch (gly residues) spans 308-341; that stretch reads NFGGSRNMGGPYGGGNYGPGGSGGSGGYGGRSRY. S312 bears the Phosphoserine mark. The residue at position 313 (R313) is an Omega-N-methylarginine. Y319 bears the Phosphotyrosine mark. 2 positions are modified to phosphoserine: S329 and S332. Phosphotyrosine is present on Y335. The residue at position 338 (R338) is an Omega-N-methylarginine.

As to quaternary structure, identified in the spliceosome C complex. Identified in a IGF2BP1-dependent mRNP granule complex containing untranslated mRNAs. Interacts with IGF2BP1. Interacts with C9orf72. Interacts with DGCR8. Interacts with TARDBP. Interacts with CKAP5. Interacts with PPIA/CYPA. Interacts (via C-terminus) with FAM76B; the interaction results in retention of HNRNPA2B1 in the nucleus and inhibition of the NF-kappa-B-mediated inflammatory pathway. Interacts with NF-kappa-B inhibitors NFKBIA and NFKBIE; the interaction may be mediated by the RRM2 domain of HNRNPA2B1, and HNRNPA2B1 may interact simultaneously with FAM76B and either NFKBIA or NFKBIE to form a complex. Post-translationally, sumoylated in exosomes, promoting miRNAs-binding. In terms of processing, asymmetric dimethylation at Arg-254 constitutes the major methylation site. According to a report, methylation affects subcellular location and promotes nuclear localization. According to another report, methylation at Arg-254 does not influence nucleocytoplasmic shuttling.

The protein resides in the nucleus. It localises to the nucleoplasm. It is found in the cytoplasmic granule. Its subcellular location is the secreted. The protein localises to the extracellular exosome. Functionally, heterogeneous nuclear ribonucleoprotein (hnRNP) that associates with nascent pre-mRNAs, packaging them into hnRNP particles. The hnRNP particle arrangement on nascent hnRNA is non-random and sequence-dependent and serves to condense and stabilize the transcripts and minimize tangling and knotting. Packaging plays a role in various processes such as transcription, pre-mRNA processing, RNA nuclear export, subcellular location, mRNA translation and stability of mature mRNAs. Forms hnRNP particles with at least 20 other different hnRNP and heterogeneous nuclear RNA in the nucleus. Involved in transport of specific mRNAs to the cytoplasm in oligodendrocytes and neurons: acts by specifically recognizing and binding the A2RE (21 nucleotide hnRNP A2 response element) or the A2RE11 (derivative 11 nucleotide oligonucleotide) sequence motifs present on some mRNAs, and promotes their transport to the cytoplasm. Specifically binds single-stranded telomeric DNA sequences, protecting telomeric DNA repeat against endonuclease digestion. Also binds other RNA molecules, such as primary miRNA (pri-miRNAs): acts as a nuclear 'reader' of the N6-methyladenosine (m6A) mark by specifically recognizing and binding a subset of nuclear m6A-containing pri-miRNAs. Binding to m6A-containing pri-miRNAs promotes pri-miRNA processing by enhancing binding of DGCR8 to pri-miRNA transcripts. Involved in miRNA sorting into exosomes following sumoylation, possibly by binding (m6A)-containing pre-miRNAs. Acts as a regulator of efficiency of mRNA splicing, possibly by binding to m6A-containing pre-mRNAs. Plays a role in the splicing of pyruvate kinase PKM by binding repressively to sequences flanking PKM exon 9, inhibiting exon 9 inclusion and resulting in exon 10 inclusion and production of the PKM M2 isoform. In Bos taurus (Bovine), this protein is Heterogeneous nuclear ribonucleoproteins A2/B1 (HNRNPA2B1).